The sequence spans 549 residues: Glucose-6-phosphate isomerase (549 aa).

The active-site Proton donor is Glu-353. Active-site residues include His-384 and Lys-510. Residues 523 to 549 (AEPPAAQSDSSTDALVRRYRSERGRTA) are disordered. A compositionally biased stretch (basic and acidic residues) spans 537–549 (LVRRYRSERGRTA).

It belongs to the GPI family.

It localises to the cytoplasm. The catalysed reaction is alpha-D-glucose 6-phosphate = beta-D-fructose 6-phosphate. It functions in the pathway carbohydrate biosynthesis; gluconeogenesis. Its pathway is carbohydrate degradation; glycolysis; D-glyceraldehyde 3-phosphate and glycerone phosphate from D-glucose: step 2/4. Catalyzes the reversible isomerization of glucose-6-phosphate to fructose-6-phosphate. This Mycolicibacterium gilvum (strain PYR-GCK) (Mycobacterium gilvum (strain PYR-GCK)) protein is Glucose-6-phosphate isomerase.